The following is a 431-amino-acid chain: Glutamyl-tRNA(Gln) amidotransferase subunit A (431 aa).

Catalysis depends on charge relay system residues K37 and S112. The active-site Acyl-ester intermediate is the S136.

The protein belongs to the amidase family. GatA subfamily. As to quaternary structure, heterotrimer of A, B and C subunits.

It carries out the reaction L-glutamyl-tRNA(Gln) + L-glutamine + ATP + H2O = L-glutaminyl-tRNA(Gln) + L-glutamate + ADP + phosphate + H(+). In terms of biological role, allows the formation of correctly charged Gln-tRNA(Gln) through the transamidation of misacylated Glu-tRNA(Gln) in organisms which lack glutaminyl-tRNA synthetase. The reaction takes place in the presence of glutamine and ATP through an activated gamma-phospho-Glu-tRNA(Gln). This chain is Glutamyl-tRNA(Gln) amidotransferase subunit A, found in Methanospirillum hungatei JF-1 (strain ATCC 27890 / DSM 864 / NBRC 100397 / JF-1).